The following is a 275-amino-acid chain: MEFQLLLLCSVWALGVCAEQEVENLSGLSTNPERDIFVVRENGTTCLMAEFAVRFLIPYDVLALNGIDLITEQTSVAIPRGAQIAGKCGPSESELQISWAAQAFNFHIYFSKEKRVQGSDGKAPEAEVWKINRVQLVYDTSENTHFINAYNPGKHTASTHRLSALVTPAGRSYVCAAQQTLTLISSDHQKGVTVSIYDIQIQPFDINADFVFSEPYKCVTDQREQLEQTLPLVLGLILGLIIVITISVYHFHLKLNAAHTQQPTLPRDRSLYKNM.

The signal sequence occupies residues 1 to 18 (MEFQLLLLCSVWALGVCA). Topologically, residues 19–228 (EQEVENLSGL…VTDQREQLEQ (210 aa)) are extracellular. N-linked (GlcNAc...) asparagine glycans are attached at residues N24 and N42. A helical membrane pass occupies residues 229–249 (TLPLVLGLILGLIIVITISVY). The Cytoplasmic portion of the chain corresponds to 250–275 (HFHLKLNAAHTQQPTLPRDRSLYKNM).

Belongs to the LAMP family. Glycosylated.

Its subcellular location is the cytoplasmic vesicle membrane. It is found in the cell membrane. The protein localises to the cell projection. It localises to the dendrite. The protein resides in the cytoplasmic vesicle. Its subcellular location is the secretory vesicle. It is found in the synaptic vesicle membrane. The protein localises to the growth cone membrane. It localises to the early endosome membrane. The protein resides in the recycling endosome. Its subcellular location is the endoplasmic reticulum-Golgi intermediate compartment membrane. It is found in the endosome membrane. Functionally, plays a role in short-term synaptic plasticity in a subset of GABAergic neurons in the brain. This Danio rerio (Zebrafish) protein is Lysosome-associated membrane glycoprotein 5 (lamp5).